Reading from the N-terminus, the 347-residue chain is Protein RecA (347 aa).

67–74 (GPESSGKT) provides a ligand contact to ATP.

It belongs to the RecA family.

Its subcellular location is the cytoplasm. In terms of biological role, can catalyze the hydrolysis of ATP in the presence of single-stranded DNA, the ATP-dependent uptake of single-stranded DNA by duplex DNA, and the ATP-dependent hybridization of homologous single-stranded DNAs. It interacts with LexA causing its activation and leading to its autocatalytic cleavage. The chain is Protein RecA from Paenarthrobacter aurescens (strain TC1).